Consider the following 112-residue polypeptide: T cell receptor alpha variable 9-1 (112 aa).

A signal peptide spans 1-20 (MNSSPGPAIALFLMFGGING). The region spanning 21 to 112 (DSVVQTEGQV…DSAVYFCALS (92 aa)) is the Ig-like domain. N-linked (GlcNAc...) asparagine glycosylation is present at Asn41. A disulfide bond links Cys42 and Cys109.

As to quaternary structure, alpha-beta TR is a heterodimer composed of an alpha and beta chain; disulfide-linked. The alpha-beta TR is associated with the transmembrane signaling CD3 coreceptor proteins to form the TR-CD3 (TcR or TCR). The assembly of alpha-beta TR heterodimers with CD3 occurs in the endoplasmic reticulum where a single alpha-beta TR heterodimer associates with one CD3D-CD3E heterodimer, one CD3G-CD3E heterodimer and one CD247 homodimer forming a stable octameric structure. CD3D-CD3E and CD3G-CD3E heterodimers preferentially associate with TR alpha and TR beta chains, respectively. The association of the CD247 homodimer is the last step of TcR assembly in the endoplasmic reticulum and is required for transport to the cell surface.

It localises to the cell membrane. Functionally, v region of the variable domain of T cell receptor (TR) alpha chain that participates in the antigen recognition. Alpha-beta T cell receptors are antigen specific receptors which are essential to the immune response and are present on the cell surface of T lymphocytes. Recognize peptide-major histocompatibility (MH) (pMH) complexes that are displayed by antigen presenting cells (APC), a prerequisite for efficient T cell adaptive immunity against pathogens. Binding of alpha-beta TR to pMH complex initiates TR-CD3 clustering on the cell surface and intracellular activation of LCK that phosphorylates the ITAM motifs of CD3G, CD3D, CD3E and CD247 enabling the recruitment of ZAP70. In turn ZAP70 phosphorylates LAT, which recruits numerous signaling molecules to form the LAT signalosome. The LAT signalosome propagates signal branching to three major signaling pathways, the calcium, the mitogen-activated protein kinase (MAPK) kinase and the nuclear factor NF-kappa-B (NF-kB) pathways, leading to the mobilization of transcription factors that are critical for gene expression and essential for T cell growth and differentiation. The T cell repertoire is generated in the thymus, by V-(D)-J rearrangement. This repertoire is then shaped by intrathymic selection events to generate a peripheral T cell pool of self-MH restricted, non-autoaggressive T cells. Post-thymic interaction of alpha-beta TR with the pMH complexes shapes TR structural and functional avidity. In Homo sapiens (Human), this protein is T cell receptor alpha variable 9-1.